A 160-amino-acid polypeptide reads, in one-letter code: Leptin (160 aa).

The signal sequence occupies residues 1 to 17 (MDYTLALALSLLQLSMC). A disulfide bridge connects residues C109 and C160.

The protein belongs to the leptin family.

It is found in the secreted. May function as part of a signaling pathway that acts to regulate the size of the body fat depot. The polypeptide is Leptin (lep) (Tetraodon nigroviridis (Spotted green pufferfish)).